A 345-amino-acid chain; its full sequence is S-adenosylmethionine:tRNA ribosyltransferase-isomerase (345 aa).

Belongs to the QueA family. As to quaternary structure, monomer.

Its subcellular location is the cytoplasm. The catalysed reaction is 7-aminomethyl-7-carbaguanosine(34) in tRNA + S-adenosyl-L-methionine = epoxyqueuosine(34) in tRNA + adenine + L-methionine + 2 H(+). It functions in the pathway tRNA modification; tRNA-queuosine biosynthesis. Transfers and isomerizes the ribose moiety from AdoMet to the 7-aminomethyl group of 7-deazaguanine (preQ1-tRNA) to give epoxyqueuosine (oQ-tRNA). The polypeptide is S-adenosylmethionine:tRNA ribosyltransferase-isomerase (Thermus thermophilus (strain ATCC BAA-163 / DSM 7039 / HB27)).